We begin with the raw amino-acid sequence, 1017 residues long: Anaphase-promoting complex subunit 5 (1017 aa).

TPR repeat units follow at residues 30–63 (KQSLSHLLIRHIKENNYQDTVKEVSLYDFIEKEL), 182–214 (DMSMDQEQQQQQQEDYNEISNYENKIKFLSPLD), 252–286 (VKRVHLISLLFNIGYQDYDQSLEDLHRYFDYVNGQ), 337–370 (PYAVLNLVRLHYHFGHYEESYLALREAIRIAQER), and 508–541 (NNNNNNNNNNNSSNSNNNGGVNMFGKSFHLWNDI). Over residues 451–525 (INSNNYNSNN…NNNSSNSNNN (75 aa)) the composition is skewed to low complexity. Disordered regions lie at residues 451-527 (INSN…NNGG) and 617-636 (NNNNNNNNNNNQIKQQQQQN). 5 TPR repeats span residues 642–675 (LLSFCKLALLYSKKSKYNEAIQILIKCFSIYKTQ), 756–790 (VICYQKIIKYYCNVRGMYEKSMNLIVKGIQISRDF), 838–871 (ADSNIALIKIHLSTDRLDKAITLIKETLPMVLSD), 876–908 (SQLYLLWAKSLISTSTKQSIDYLNRSEQLFLQL), and 931–964 (KEIYYLKSIIYNDLGDIENRNLYAKKFKSILVPS).

It belongs to the APC5 family. In terms of assembly, the APC/C is composed of at least 13 subunits that stay tightly associated throughout the cell cycle: anapc1, anapc2, anapc3, anapc4, anapc5, anapc6, anapc7, anapc8, anapc10, anapc11, cdc20, cdc26 and cdh1.

It localises to the nucleus. It participates in protein modification; protein ubiquitination. In terms of biological role, component of the anaphase promoting complex/cyclosome (APC/C), a cell cycle-regulated E3 ubiquitin-protein ligase complex that controls progression through mitosis and the G1 phase of the cell cycle. The polypeptide is Anaphase-promoting complex subunit 5 (anapc5) (Dictyostelium discoideum (Social amoeba)).